Here is a 118-residue protein sequence, read N- to C-terminus: Putative pterin-4-alpha-carbinolamine dehydratase (118 aa).

It belongs to the pterin-4-alpha-carbinolamine dehydratase family.

The catalysed reaction is (4aS,6R)-4a-hydroxy-L-erythro-5,6,7,8-tetrahydrobiopterin = (6R)-L-erythro-6,7-dihydrobiopterin + H2O. The chain is Putative pterin-4-alpha-carbinolamine dehydratase from Xanthomonas oryzae pv. oryzae (strain PXO99A).